The chain runs to 123 residues: Large ribosomal subunit protein uL18 (123 aa).

This sequence belongs to the universal ribosomal protein uL18 family. In terms of assembly, part of the 50S ribosomal subunit; part of the 5S rRNA/L5/L18/L25 subcomplex. Contacts the 5S and 23S rRNAs.

In terms of biological role, this is one of the proteins that bind and probably mediate the attachment of the 5S RNA into the large ribosomal subunit, where it forms part of the central protuberance. The chain is Large ribosomal subunit protein uL18 from Bifidobacterium animalis subsp. lactis (strain AD011).